The chain runs to 333 residues: 4-hydroxy-2-oxovalerate aldolase (333 aa).

Residues V4–M254 form the Pyruvate carboxyltransferase domain. R12 to D13 lines the substrate pocket. D13 lines the Mn(2+) pocket. The active-site Proton acceptor is H16. Residue H193 participates in substrate binding. The Mn(2+) site is built by H193 and H195. Y284 provides a ligand contact to substrate.

It belongs to the 4-hydroxy-2-oxovalerate aldolase family.

The enzyme catalyses (S)-4-hydroxy-2-oxopentanoate = acetaldehyde + pyruvate. The polypeptide is 4-hydroxy-2-oxovalerate aldolase (Desulfitobacterium hafniense (strain DSM 10664 / DCB-2)).